The chain runs to 78 residues: Major outer membrane lipoprotein Lpp 1 (78 aa).

Residues 1 to 20 (MNRTKLVLGAVILGSTLLAG) form the signal peptide. A lipid anchor (N-palmitoyl cysteine) is attached at Cys-21. Cys-21 carries the S-diacylglycerol cysteine lipid modification. 2 repeats span residues 24-34 (NAKIDQLSSDV) and 38-48 (NAKVDQLSNDV). Residues 27-75 (IDQLSSDVQTLNAKVDQLSNDVNAMRSDVQAAKDDAARANQRLDNQATK) adopt a coiled-coil conformation. Residues 56 to 78 (QAAKDDAARANQRLDNQATKYRK) are disordered. The span at 68-78 (RLDNQATKYRK) shows a compositional bias: polar residues. Lys-78 bears the N6-murein peptidoglycan lysine mark.

This sequence belongs to the Lpp family. Homotrimer.

It localises to the cell outer membrane. Its subcellular location is the secreted. It is found in the cell wall. A highly abundant outer membrane lipoprotein that controls the distance between the inner and outer membranes. The only protein known to be covalently linked to the peptidoglycan network (PGN). Also non-covalently binds the PGN. The link between the cell outer membrane and PGN contributes to maintenance of the structural and functional integrity of the cell envelope, and maintains the correct distance between the PGN and the outer membrane. This Salmonella paratyphi A (strain ATCC 9150 / SARB42) protein is Major outer membrane lipoprotein Lpp 1.